A 501-amino-acid chain; its full sequence is Putative ribose/galactose/methyl galactoside import ATP-binding protein 1 (501 aa).

ABC transporter domains follow at residues 5–237 (VSLS…VGRQ) and 249–492 (VPGE…MTRS). 37-44 (GENGAGKS) is a binding site for ATP.

Belongs to the ABC transporter superfamily. Carbohydrate importer 2 (CUT2) (TC 3.A.1.2) family.

It localises to the cell inner membrane. The enzyme catalyses D-ribose(out) + ATP + H2O = D-ribose(in) + ADP + phosphate + H(+). The catalysed reaction is D-galactose(out) + ATP + H2O = D-galactose(in) + ADP + phosphate + H(+). In terms of biological role, part of an ABC transporter complex involved in carbohydrate import. Could be involved in ribose, galactose and/or methyl galactoside import. Responsible for energy coupling to the transport system. The polypeptide is Putative ribose/galactose/methyl galactoside import ATP-binding protein 1 (Rhizobium meliloti (strain 1021) (Ensifer meliloti)).